The primary structure comprises 316 residues: Ribosomal RNA small subunit methyltransferase H (316 aa).

Residues 35–37 (GGH), D55, F79, D101, and Q108 each bind S-adenosyl-L-methionine.

It belongs to the methyltransferase superfamily. RsmH family.

It localises to the cytoplasm. It carries out the reaction cytidine(1402) in 16S rRNA + S-adenosyl-L-methionine = N(4)-methylcytidine(1402) in 16S rRNA + S-adenosyl-L-homocysteine + H(+). Its function is as follows. Specifically methylates the N4 position of cytidine in position 1402 (C1402) of 16S rRNA. The protein is Ribosomal RNA small subunit methyltransferase H of Aliivibrio salmonicida (strain LFI1238) (Vibrio salmonicida (strain LFI1238)).